Here is a 114-residue protein sequence, read N- to C-terminus: uncharacterized protein (114 aa).

A disordered region spans residues 1–24 (MFGACYKQPLKPSGSEPPAEECRM).

As to expression, expressed in kidney and liver.

This is an uncharacterized protein from Homo sapiens (Human).